An 88-amino-acid chain; its full sequence is MRSPHITISLVFLFFLFLIIQTHQRTIDQTHQIGSNVQHVSDMAVTSPEGKRRERFRVRRPMTTWLKGKMIGANEHGVPSGPNPISNR.

The first 24 residues, 1 to 24 (MRSPHITISLVFLFFLFLIIQTHQ), serve as a signal peptide directing secretion. Positions 69 to 88 (KMIGANEHGVPSGPNPISNR) are disordered. Residues proline 79 and proline 82 each carry the hydroxyproline modification. A glycan (O-linked (Ara...) hydroxyproline) is linked at proline 82.

This sequence belongs to the CLV3/ESR signal peptide family. In terms of processing, the O-glycosylation (arabinosylation) of the hydroxyproline Pro-82 enhances binding affinity of the CLE42p peptide for its receptor. In terms of tissue distribution, expressed at low levels in seedlings, roots and inflorescence.

The protein resides in the secreted. Its subcellular location is the extracellular space. Extracellular signal peptide that regulates cell fate. Represses tracheary element differentiation but promotes the formation of procambial cells. The protein is CLAVATA3/ESR (CLE)-related protein 42 of Arabidopsis thaliana (Mouse-ear cress).